A 98-amino-acid chain; its full sequence is MRSLTLAAVLACSLLLVFHTSAAEELEVQDGHLMNPGDGDTALATVDDERIIECFFSCEIEKDGKSKEGKPCKPKGDKNKDKKCSGGWRCKIKMCLKI.

Positions 1-23 (MRSLTLAAVLACSLLLVFHTSAA) are cleaved as a signal peptide. Residues 24-50 (EELEVQDGHLMNPGDGDTALATVDDER) constitute a propeptide that is removed on maturation. Intrachain disulfides connect Cys-54/Cys-84, Cys-58/Cys-90, and Cys-72/Cys-95. The disordered stretch occupies residues 63–84 (DGKSKEGKPCKPKGDKNKDKKC).

It belongs to the neurotoxin 12 (Hwtx-2) family. 01 (Ap1a) subfamily. Expressed by the venom gland.

It localises to the secreted. Is toxic to both insects and mammals. Induces reversible paralysis when injected into S.frugiperda larvae. Reduces both the amplitude and frequency of responses from muscle (GF-TTM and GF-DLM) pathways in the D.melanogaster giant fiber circuit, suggesting an action at the neuromuscular junction, which is mediated by glutamatergic receptors. In mice, intracranial injection of 30 ug causes increased urination, myoclonus, hypermotility with circular movements followed by respiratory and generalized seizures resulting in death within 25-35 minutes of injection. This chain is U1-theraphotoxin-Ap1a, found in Acanthoscurria paulensis (Brazilian giant black tarantula spider).